The chain runs to 163 residues: Probable ribosome biogenesis protein RLP24 (163 aa).

It belongs to the eukaryotic ribosomal protein eL24 family. Associated with nucleolar and cytoplasmic pre-60S particles. At the end of biogenesis it dissociates from cytoplasmic pre-60S particles and is likely to be exchanged for its ribosomal homolog, RPL24.

It localises to the nucleus. The protein localises to the nucleolus. Involved in the biogenesis of the 60S ribosomal subunit. Ensures the docking of GTPBP4/NOG1 to pre-60S particles. This is Probable ribosome biogenesis protein RLP24 (Rsl24d1) from Rattus norvegicus (Rat).